Reading from the N-terminus, the 132-residue chain is Small ribosomal subunit protein uS11 (132 aa).

This sequence belongs to the universal ribosomal protein uS11 family. In terms of assembly, part of the 30S ribosomal subunit.

Functionally, located on the platform of the 30S subunit. The polypeptide is Small ribosomal subunit protein uS11 (Sulfurisphaera tokodaii (strain DSM 16993 / JCM 10545 / NBRC 100140 / 7) (Sulfolobus tokodaii)).